Here is a 154-residue protein sequence, read N- to C-terminus: Ribonuclease H (154 aa).

The RNase H type-1 domain occupies 5–146 (EQNIVYLYCD…ADELANRGID (142 aa)). Mg(2+) contacts are provided by aspartate 14, glutamate 52, aspartate 74, and aspartate 138.

The protein belongs to the RNase H family. Monomer. Mg(2+) is required as a cofactor.

The protein resides in the cytoplasm. It catalyses the reaction Endonucleolytic cleavage to 5'-phosphomonoester.. Functionally, endonuclease that specifically degrades the RNA of RNA-DNA hybrids. The chain is Ribonuclease H from Coxiella burnetii (strain CbuK_Q154) (Coxiella burnetii (strain Q154)).